The chain runs to 92 residues: CRISPR-associated endoribonuclease Cas2 2 (92 aa).

Asp12 contacts Mg(2+).

Belongs to the CRISPR-associated endoribonuclease Cas2 protein family. As to quaternary structure, homodimer, forms a heterotetramer with a Cas1 homodimer. The cofactor is Mg(2+).

CRISPR (clustered regularly interspaced short palindromic repeat), is an adaptive immune system that provides protection against mobile genetic elements (viruses, transposable elements and conjugative plasmids). CRISPR clusters contain sequences complementary to antecedent mobile elements and target invading nucleic acids. CRISPR clusters are transcribed and processed into CRISPR RNA (crRNA). Functions as a ssRNA-specific endoribonuclease. Involved in the integration of spacer DNA into the CRISPR cassette. The protein is CRISPR-associated endoribonuclease Cas2 2 (cas22) of Archaeoglobus fulgidus (strain ATCC 49558 / DSM 4304 / JCM 9628 / NBRC 100126 / VC-16).